An 833-amino-acid chain; its full sequence is Leucine--tRNA ligase (833 aa).

Residues 41-52 (PYPSGAGLHVGH) carry the 'HIGH' region motif. The 'KMSKS' region signature appears at 610–614 (KMSKS). K613 lines the ATP pocket.

It belongs to the class-I aminoacyl-tRNA synthetase family.

It is found in the cytoplasm. It carries out the reaction tRNA(Leu) + L-leucine + ATP = L-leucyl-tRNA(Leu) + AMP + diphosphate. This is Leucine--tRNA ligase from Streptococcus pyogenes serotype M3 (strain ATCC BAA-595 / MGAS315).